The primary structure comprises 367 residues: 3-dehydroquinate synthase (367 aa).

NAD(+) is bound by residues 72-77 (DGENYK), 106-110 (GVIGD), 130-131 (TT), Lys-143, Lys-152, and 170-173 (FLST). Zn(2+) is bound by residues Glu-185, His-248, and His-265.

This sequence belongs to the sugar phosphate cyclases superfamily. Dehydroquinate synthase family. Requires Co(2+) as cofactor. Zn(2+) serves as cofactor. The cofactor is NAD(+).

It localises to the cytoplasm. It catalyses the reaction 7-phospho-2-dehydro-3-deoxy-D-arabino-heptonate = 3-dehydroquinate + phosphate. Its pathway is metabolic intermediate biosynthesis; chorismate biosynthesis; chorismate from D-erythrose 4-phosphate and phosphoenolpyruvate: step 2/7. Catalyzes the conversion of 3-deoxy-D-arabino-heptulosonate 7-phosphate (DAHP) to dehydroquinate (DHQ). This chain is 3-dehydroquinate synthase, found in Buchnera aphidicola subsp. Cinara cedri (strain Cc).